The following is a 398-amino-acid chain: Succinate--CoA ligase [ADP-forming] subunit beta (398 aa).

The 246-residue stretch at 9-254 (KRLLHTYGAP…LSEEDEKEIE (246 aa)) folds into the ATP-grasp domain. ATP contacts are provided by residues lysine 46, 53–55 (GRG), glutamate 109, alanine 112, and glutamate 117. 2 residues coordinate Mg(2+): asparagine 209 and aspartate 223. Substrate-binding positions include asparagine 274 and 331–333 (GIM).

The protein belongs to the succinate/malate CoA ligase beta subunit family. In terms of assembly, heterotetramer of two alpha and two beta subunits. It depends on Mg(2+) as a cofactor.

It carries out the reaction succinate + ATP + CoA = succinyl-CoA + ADP + phosphate. The enzyme catalyses GTP + succinate + CoA = succinyl-CoA + GDP + phosphate. The protein operates within carbohydrate metabolism; tricarboxylic acid cycle; succinate from succinyl-CoA (ligase route): step 1/1. In terms of biological role, succinyl-CoA synthetase functions in the citric acid cycle (TCA), coupling the hydrolysis of succinyl-CoA to the synthesis of either ATP or GTP and thus represents the only step of substrate-level phosphorylation in the TCA. The beta subunit provides nucleotide specificity of the enzyme and binds the substrate succinate, while the binding sites for coenzyme A and phosphate are found in the alpha subunit. This is Succinate--CoA ligase [ADP-forming] subunit beta from Brucella anthropi (strain ATCC 49188 / DSM 6882 / CCUG 24695 / JCM 21032 / LMG 3331 / NBRC 15819 / NCTC 12168 / Alc 37) (Ochrobactrum anthropi).